We begin with the raw amino-acid sequence, 212 residues long: uncharacterized protein (212 aa).

Residues G53, E74, and D97 each coordinate S-adenosyl-L-methionine.

The protein belongs to the methyltransferase superfamily. YrrT family.

In terms of biological role, could be a S-adenosyl-L-methionine-dependent methyltransferase. This is an uncharacterized protein from Bacillus cytotoxicus (strain DSM 22905 / CIP 110041 / 391-98 / NVH 391-98).